The following is a 317-amino-acid chain: Ribosomal protein L11 methyltransferase (317 aa).

S-adenosyl-L-methionine contacts are provided by T162, G183, D205, and N248.

This sequence belongs to the methyltransferase superfamily. PrmA family.

The protein resides in the cytoplasm. It catalyses the reaction L-lysyl-[protein] + 3 S-adenosyl-L-methionine = N(6),N(6),N(6)-trimethyl-L-lysyl-[protein] + 3 S-adenosyl-L-homocysteine + 3 H(+). Functionally, methylates ribosomal protein L11. This Alkaliphilus metalliredigens (strain QYMF) protein is Ribosomal protein L11 methyltransferase.